The sequence spans 64 residues: Disintegrin CV-11-beta (64 aa).

Positions 1 to 64 constitute a Disintegrin domain; sequence NSAHPCCDPV…SDCPRNPWKD (64 aa). 4 disulfides stabilise this stretch: cysteine 6-cysteine 29, cysteine 20-cysteine 26, cysteine 25-cysteine 50, and cysteine 38-cysteine 57. A Cell attachment site motif is present at residues 42-44; the sequence is RGD.

The protein belongs to the disintegrin family. Dimeric disintegrin subfamily. As to quaternary structure, heterodimer with subunit alpha; disulfide-linked. Expressed by the venom gland.

Its subcellular location is the secreted. Its function is as follows. Inhibits ADP-induced human platelet aggregation. Antagonist of alpha-IIb/beta-3 (ITGA2B/ITGB3). The protein is Disintegrin CV-11-beta of Cerastes vipera (Sahara sand viper).